Reading from the N-terminus, the 292-residue chain is Aquaporin PIP1-3/PIP1-4 (292 aa).

The tract at residues 1–42 is disordered; that stretch reads MEGKEEDVRLGANKFSERQPIGTAAQGAGAGDDDKDYKEPPP. A run of 2 helical transmembrane segments spans residues 61 to 81 and 96 to 118; these read IAEF…VMGV and IAWS…SGGH. The NPA 1 signature appears at 120–122; it reads NPA. Helical transmembrane passes span 139–159, 181–201, and 215–235; these read IFYI…VKGF, GDGL…VFSA, and ILAP…TIPI. The short motif at 241-243 is the NPA 2 element; sequence NPA. Residues 263-283 form a helical membrane-spanning segment; the sequence is IFWVGPFIGAALAAIYHQVII.

This sequence belongs to the MIP/aquaporin (TC 1.A.8) family. PIP (TC 1.A.8.11) subfamily.

It localises to the cell membrane. Aquaporins facilitate the transport of water and small neutral solutes across cell membranes. This is Aquaporin PIP1-3/PIP1-4 (PIP1-3) from Zea mays (Maize).